The chain runs to 316 residues: Ribose-phosphate pyrophosphokinase (316 aa).

ATP contacts are provided by residues 41–43 and 100–101; these read DGE and RQ. Residues histidine 134 and aspartate 174 each contribute to the Mg(2+) site. Lysine 197 is a catalytic residue. Residues arginine 199, aspartate 223, and 227–231 each bind D-ribose 5-phosphate; that span reads DTAGT.

This sequence belongs to the ribose-phosphate pyrophosphokinase family. Class I subfamily. As to quaternary structure, homohexamer. The cofactor is Mg(2+).

Its subcellular location is the cytoplasm. The catalysed reaction is D-ribose 5-phosphate + ATP = 5-phospho-alpha-D-ribose 1-diphosphate + AMP + H(+). Its pathway is metabolic intermediate biosynthesis; 5-phospho-alpha-D-ribose 1-diphosphate biosynthesis; 5-phospho-alpha-D-ribose 1-diphosphate from D-ribose 5-phosphate (route I): step 1/1. In terms of biological role, involved in the biosynthesis of the central metabolite phospho-alpha-D-ribosyl-1-pyrophosphate (PRPP) via the transfer of pyrophosphoryl group from ATP to 1-hydroxyl of ribose-5-phosphate (Rib-5-P). In Caldanaerobacter subterraneus subsp. tengcongensis (strain DSM 15242 / JCM 11007 / NBRC 100824 / MB4) (Thermoanaerobacter tengcongensis), this protein is Ribose-phosphate pyrophosphokinase.